The chain runs to 455 residues: Nucleoprotein (455 aa).

The segment at 1 to 62 (MSFVPGQENA…ATTQPNSGSV (62 aa)) is disordered. A compositionally biased stretch (low complexity) spans 9–23 (NAGSRSSSGNRAGNG). 2 stretches are compositionally biased toward polar residues: residues 30–42 (WADQ…NNQN) and 49–61 (PKQT…NSGS). Positions 56–197 (QPNSGSVVPH…GFYVEGSGRS (142 aa)) are RNA-binding. In terms of domain architecture, CoV N NTD spans 64-193 (PHYSWFSGIT…VLPQGFYVEG (130 aa)). Residues arginine 109, arginine 125, and arginine 167 each coordinate RNA. 3 disordered regions span residues 159–230 (RTSA…STVK), 271–290 (PRQK…FGKR), and 382–429 (QDGG…RELT). At serine 170 the chain carries Phosphoserine; by host. Residue threonine 177 is modified to Phosphothreonine; by host. Residues 193 to 212 (GSGRSAPASRSGSRPQSRGP) show a composition bias toward low complexity. Phosphoserine; by host is present on serine 194. A compositionally biased stretch (polar residues) spans 215-227 (RARSSSNQRQPAS). In terms of domain architecture, CoV N CTD spans 260-383 (AKEVRQKILN…ENLNAYQNQD (124 aa)). The dimerization stretch occupies residues 267 to 384 (ILNKPRQKRT…NLNAYQNQDG (118 aa)). Serine 390 bears the Phosphoserine; by host mark. The span at 393 to 402 (PQRKRGTKQK) shows a compositional bias: basic residues. Position 425 is a phosphoserine; by host (serine 425). The residue at position 429 (threonine 429) is a Phosphothreonine; by host.

It belongs to the betacoronavirus nucleocapsid protein family. Homooligomer. Both monomeric and oligomeric forms interact with RNA. Interacts with protein M. Interacts with NSP3; this interaction serves to tether the genome to the newly translated replicase-transcriptase complex at a very early stage of infection. Interacts (when phosphorylated) with host DDX1; this interaction is essential to produce a full set of subgenomic and genomic RNAs. In terms of processing, ADP-ribosylated. The ADP-ribosylation is retained in the virion during infection. Phosphorylated on serine and threonine residues. Phosphorylated by host GSK3A and GSK3B. Phosphorylation allows recruitment of host RNA helicase DDX1 which facilitates template readthrough and enables longer subgenomic mRNA synthesis.

The protein resides in the virion. It is found in the host endoplasmic reticulum-Golgi intermediate compartment. It localises to the host Golgi apparatus. Functionally, packages the positive strand viral genome RNA into a helical ribonucleocapsid (RNP) and plays a fundamental role during virion assembly through its interactions with the viral genome and membrane protein M. Plays an important role in enhancing the efficiency of subgenomic viral RNA transcription as well as viral replication. The sequence is that of Nucleoprotein from Murine coronavirus (strain JHM) (MHV-JHM).